A 776-amino-acid polypeptide reads, in one-letter code: Microtubule-associated protein tau (776 aa).

A compositionally biased stretch (basic and acidic residues) spans 1–26 (MAEPRQEFEVMEDHAGTYGLGDRKDQ). The interval 1–591 (MAEPRQEFEV…PVPMPDLKNV (591 aa)) is disordered. Ala2 bears the N-acetylalanine mark. 2 positions are modified to phosphotyrosine: Tyr18 and Tyr29. A Glycyl lysine isopeptide (Lys-Gly) (interchain with G-Cter in ubiquitin) cross-link involves residue Lys44. Phosphoserine is present on residues Ser46 and Ser61. The segment covering 61 to 71 (SETSDAKSTPT) has biased composition (polar residues). Phosphothreonine occurs at positions 69, 71, and 111. Composition is skewed to basic and acidic residues over residues 179–189 (EGGRHAPELLK) and 207–216 (GGKERPGSKE). Ser214 bears the Phosphoserine mark. Acidic residues predominate over residues 217–228 (EVDEDRDVDESS). Basic and acidic residues-rich tracts occupy residues 293–303 (KGQDAHLEFTF) and 314–323 (EQAHSEEHLG). Residues 324 to 340 (RAAFPGAPGEGPEARGP) show a composition bias toward low complexity. 2 stretches are compositionally biased toward basic and acidic residues: residues 344–356 (EDTKEADLPEPSE) and 381–393 (KSKDGTGSDDKKA). Over residues 440-452 (KYVSSVTPRTGSS) the composition is skewed to polar residues. The span at 455–466 (KEMKLKGADGKT) shows a compositional bias: basic and acidic residues. Residue Thr470 is modified to Phosphothreonine. Omega-N-methylarginine is present on Arg472. N6,N6-dimethyllysine; alternate is present on Lys480. At Lys480 the chain carries N6-acetyllysine; alternate. Thr486, Thr492, and Thr498 each carry phosphothreonine. A phosphoserine mark is found at Ser502, Ser526, and Ser530. Basic and acidic residues predominate over residues 517 to 528 (RSERGEPPKSGD). Residues 529-549 (RSGYSSPGSPGTPGSRSRTPS) are compositionally biased toward low complexity. Position 532 is a phosphotyrosine (Tyr532). A phosphoserine mark is found at Ser533, Ser534, and Ser537. Phosphothreonine is present on residues Thr540 and Thr547. At Ser549 the chain carries Phosphoserine. Thr552 carries the post-translational modification Phosphothreonine. Lys560 is subject to N6-acetyllysine. Thr566 is modified (phosphothreonine). A phosphoserine mark is found at Ser570 and Ser572. Tau/MAP repeat units follow at residues 579–609 (QTAPVPMPDLKNVKSKIGSTENLKHQPGGGK), 610–640 (VQIINKKLDLSNVQSKCGSKDNIKHVPGGGS), 641–671 (VQIVYKPVDLSKVTSKCGSLGNIHHKPGGGQ), and 672–703 (VEVKSEKLDFKDRVQSKIGSLDNITHVPGGGN). Lys589 is covalently cross-linked (Glycyl lysine isopeptide (Lys-Gly) (interchain with G-Cter in ubiquitin)). An N6-acetyllysine; alternate modification is found at Lys594. Lys594 carries the post-translational modification N6-methyllysine; alternate. A Glycyl lysine isopeptide (Lys-Gly) (interchain with G-Cter in ubiquitin); alternate cross-link involves residue Lys594. Position 597 is a phosphoserine (Ser597). Lys602 participates in a covalent cross-link: Glycyl lysine isopeptide (Lys-Gly) (interchain with G-Cter in ubiquitin). Lys616 carries the post-translational modification N6-acetyllysine; alternate. A Glycyl lysine isopeptide (Lys-Gly) (interchain with G-Cter in ubiquitin); alternate cross-link involves residue Lys616. 2 positions are modified to phosphoserine: Ser620 and Ser624. Lys625 is modified (N6-acetyllysine). Residue Ser628 is modified to Phosphoserine. Lys633 carries the post-translational modification N6-acetyllysine; alternate. Lys633 is covalently cross-linked (Glycyl lysine isopeptide (Lys-Gly) (interchain with G-Cter in ubiquitin); alternate). Ser640 bears the Phosphoserine mark. Lys646 bears the N6,N6-dimethyllysine; alternate mark. Lys646, Lys652, and Lys656 each carry N6-acetyllysine; alternate. Residues Lys646, Lys652, and Lys656 each participate in a glycyl lysine isopeptide (Lys-Gly) (interchain with G-Cter in ubiquitin); alternate cross-link. Ser659 carries the post-translational modification Phosphoserine. Residues Lys666, Lys678, and Lys682 each carry the N6-acetyllysine; alternate modification. Glycyl lysine isopeptide (Lys-Gly) (interchain with G-Cter in ubiquitin); alternate cross-links involve residues Lys666, Lys678, and Lys682. At Arg684 the chain carries Omega-N-methylarginine. A Phosphoserine modification is found at Ser687. Lys688 is covalently cross-linked (Glycyl lysine isopeptide (Lys-Gly) (interchain with G-Cter in ubiquitin)). Ser691 carries the phosphoserine modification. Lys704 bears the N6-acetyllysine; alternate mark. A Glycyl lysine isopeptide (Lys-Gly) (interchain with G-Cter in ubiquitin); alternate cross-link involves residue Lys704. Lys710 participates in a covalent cross-link: Glycyl lysine isopeptide (Lys-Gly) (interchain with G-Cter in ubiquitin). Lys720 carries the N6-acetyllysine; alternate modification. Lys720 participates in a covalent cross-link: Glycyl lysine isopeptide (Lys-Gly) (interchain with G-Cter in ubiquitin); alternate. At Tyr729 the chain carries Phosphotyrosine. Phosphoserine is present on residues Ser731 and Ser735. The interval 733–752 (VVSGDTSPRHLSNVSSTGSI) is disordered. Polar residues predominate over residues 736 to 751 (GDTSPRHLSNVSSTGS). Thr738 is subject to Phosphothreonine. A phosphoserine mark is found at Ser739, Ser744, Ser751, and Ser757. Thr762 is modified (phosphothreonine).

As to quaternary structure, interacts with MARK1, MARK2, MARK3 and MARK4. Interacts with SQSTM1 when polyubiquitinated. Interacts with PSMC2 through SQSTM1. Interacts with FKBP4. Binds to CSNK1D. Interacts with SGK1. Interacts with EPM2A; the interaction dephosphorylates MAPT at Ser-396. Interacts with PIN1. Interacts with LRRK2. Interacts with LRP1, leading to endocytosis; this interaction is reduced in the presence of LRPAP1/RAP. Polyubiquitinated. Requires functional TRAF6 and may provoke SQSTM1-dependent degradation by the proteasome. Post-translationally, phosphorylation at various serine and threonine residues in S-P or T-P motifs by proline-directed protein kinases (PDPK1, CDK1, CDK5, GSK3, MAPK) (a few sites per protein in interphase, more in mitosis), and at serine residues in K-X-G-S motifs by MAP/microtubule affinity-regulating kinase (MARK1, MARK2, MARK3 or MARK4), causing detachment from microtubules, and their disassembly. Phosphorylation at Ser-597 by BRSK1 and BRSK2 in neurons affects ability to bind microtubules and plays a role in neuron polarization. Phosphorylated by PHK. Dephosphorylation at several serine and threonine residues by the serine/threonine phosphatase PPP5C. Phosphorylation at Ser-214 by SGK1 mediates microtubule depolymerization and neurite formation in hippocampal neurons.

Its subcellular location is the cytoplasm. It localises to the cytosol. The protein resides in the cell membrane. The protein localises to the cytoskeleton. It is found in the cell projection. Its subcellular location is the axon. It localises to the dendrite. Functionally, promotes microtubule assembly and stability, and might be involved in the establishment and maintenance of neuronal polarity. The C-terminus binds axonal microtubules while the N-terminus binds neural plasma membrane components, suggesting that tau functions as a linker protein between both. Axonal polarity is predetermined by tau localization (in the neuronal cell) in the domain of the cell body defined by the centrosome. The short isoforms allow plasticity of the cytoskeleton whereas the longer isoforms may preferentially play a role in its stabilization. This is Microtubule-associated protein tau (MAPT) from Pan troglodytes (Chimpanzee).